Here is a 563-residue protein sequence, read N- to C-terminus: Glucocorticoid modulatory element-binding protein 1 (563 aa).

Ala2 bears the N-acetylalanine mark. The 85-residue stretch at 72-156 (ASTIEANEDM…RKMMDSGQID (85 aa)) folds into the SAND domain. Cys103 serves as a coordination point for Zn(2+). Residues Lys129, Lys133, Lys136, and Arg147 each contribute to the DNA site. 3 residues coordinate Zn(2+): His160, Cys164, and Cys168. Residues 304–355 (MDTVKKVLDNRKNQVEQGEEQFLYTLTDLERQLEEQKKQAQDHRLKSQTVQN) are a coiled coil. A disordered region spans residues 360-385 (PVSTPKPPKRPRLQRPASTTVLSPSP).

Homodimer, and heterodimer of GMEB1 and GMEB2. Interacts with TRIM63. Interacts with the glucocorticoid receptor (NR3C1) and NCOA2/TIF2. May interact with HSP27 and CREB-binding protein (CBP).

It is found in the nucleus. The protein resides in the cytoplasm. Trans-acting factor that binds to glucocorticoid modulatory elements (GME) present in the TAT (tyrosine aminotransferase) promoter and increases sensitivity to low concentrations of glucocorticoids. Also binds to the transferrin receptor promoter. The chain is Glucocorticoid modulatory element-binding protein 1 (GMEB1) from Bos taurus (Bovine).